The sequence spans 473 residues: Suppressor of SWI4 1 homolog (473 aa).

Residues 29–292 enclose the Brix domain; it reads PHSFVFTRGC…LIKVQEGVGE (264 aa). Phosphoserine occurs at positions 238 and 240. The segment at 323 to 473 is disordered; it reads AQRQAQQAQN…GRGRPGKRVA (151 aa). The segment covering 324 to 334 has biased composition (low complexity); that stretch reads QRQAQQAQNVQ. Residues 335–352 are compositionally biased toward basic and acidic residues; sequence RKQEQREAHRKKSLEGMK. Serine 359 is subject to Phosphoserine. Over residues 375–388 the composition is skewed to acidic residues; the sequence is LGEDDDEQEDDDIE. A compositionally biased stretch (basic residues) spans 409-421; it reads KRLAKSPGRKRKR. Over residues 422–443 the composition is skewed to basic and acidic residues; sequence WEMDRGRGRLCDQKFPKTKDKS. At lysine 438 the chain carries N6-acetyllysine. Basic residues predominate over residues 462-473; sequence GRGRGRPGKRVA.

As to expression, widely expressed.

The protein resides in the nucleus. It localises to the nucleolus. Its function is as follows. May have a role in cell growth. The protein is Suppressor of SWI4 1 homolog (PPAN) of Homo sapiens (Human).